Here is a 299-residue protein sequence, read N- to C-terminus: Acetylglutamate kinase (299 aa).

Substrate-binding positions include 66 to 67, Arg88, and Asn196; that span reads GG.

This sequence belongs to the acetylglutamate kinase family. ArgB subfamily.

Its subcellular location is the cytoplasm. The enzyme catalyses N-acetyl-L-glutamate + ATP = N-acetyl-L-glutamyl 5-phosphate + ADP. It participates in amino-acid biosynthesis; L-arginine biosynthesis; N(2)-acetyl-L-ornithine from L-glutamate: step 2/4. In terms of biological role, catalyzes the ATP-dependent phosphorylation of N-acetyl-L-glutamate. The protein is Acetylglutamate kinase of Alcanivorax borkumensis (strain ATCC 700651 / DSM 11573 / NCIMB 13689 / SK2).